The chain runs to 505 residues: Lysine--tRNA ligase (505 aa).

Positions 409 and 416 each coordinate Mg(2+).

This sequence belongs to the class-II aminoacyl-tRNA synthetase family. As to quaternary structure, homodimer. Mg(2+) serves as cofactor.

It is found in the cytoplasm. It catalyses the reaction tRNA(Lys) + L-lysine + ATP = L-lysyl-tRNA(Lys) + AMP + diphosphate. The sequence is that of Lysine--tRNA ligase from Latilactobacillus sakei subsp. sakei (strain 23K) (Lactobacillus sakei subsp. sakei).